A 240-amino-acid chain; its full sequence is Flavin-dependent thymidylate synthase (240 aa).

The ThyX domain maps to 13 to 235; that stretch reads ITVELVKHSA…PETHAAFEKQ (223 aa). FAD is bound by residues Ser64, 87-89, and Glu95; that span reads RHR. DUMP-binding positions include 84–87, 95–99, and Arg167; these read EFMR and EESGR. The ThyX motif signature appears at 87–97; the sequence is RHRIASYNEES. FAD contacts are provided by residues 183–185 and Asn189; that span reads NAR. Arg194 provides a ligand contact to dUMP. Arg194 (involved in ionization of N3 of dUMP, leading to its activation) is an active-site residue.

It belongs to the thymidylate synthase ThyX family. In terms of assembly, homotetramer. Requires FAD as cofactor.

The catalysed reaction is dUMP + (6R)-5,10-methylene-5,6,7,8-tetrahydrofolate + NADPH + H(+) = dTMP + (6S)-5,6,7,8-tetrahydrofolate + NADP(+). The protein operates within pyrimidine metabolism; dTTP biosynthesis. In terms of biological role, catalyzes the reductive methylation of 2'-deoxyuridine-5'-monophosphate (dUMP) to 2'-deoxythymidine-5'-monophosphate (dTMP) while utilizing 5,10-methylenetetrahydrofolate (mTHF) as the methyl donor, and NADPH and FADH(2) as the reductant. The protein is Flavin-dependent thymidylate synthase of Tropheryma whipplei (strain TW08/27) (Whipple's bacillus).